The primary structure comprises 130 residues: L-ectoine synthase (130 aa).

The protein belongs to the ectoine synthase family.

It carries out the reaction (2S)-4-acetamido-2-aminobutanoate = L-ectoine + H2O. It participates in amine and polyamine biosynthesis; ectoine biosynthesis; L-ectoine from L-aspartate 4-semialdehyde: step 3/3. Functionally, catalyzes the circularization of gamma-N-acetyl-alpha,gamma-diaminobutyric acid (ADABA) to ectoine (1,4,5,6-tetrahydro-2-methyl-4-pyrimidine carboxylic acid), which is an excellent osmoprotectant. The chain is L-ectoine synthase from Mycolicibacterium vanbaalenii (strain DSM 7251 / JCM 13017 / BCRC 16820 / KCTC 9966 / NRRL B-24157 / PYR-1) (Mycobacterium vanbaalenii).